Reading from the N-terminus, the 262-residue chain is Indole-3-glycerol phosphate synthase (262 aa).

This sequence belongs to the TrpC family.

It carries out the reaction 1-(2-carboxyphenylamino)-1-deoxy-D-ribulose 5-phosphate + H(+) = (1S,2R)-1-C-(indol-3-yl)glycerol 3-phosphate + CO2 + H2O. It functions in the pathway amino-acid biosynthesis; L-tryptophan biosynthesis; L-tryptophan from chorismate: step 4/5. The chain is Indole-3-glycerol phosphate synthase from Chlorobium luteolum (strain DSM 273 / BCRC 81028 / 2530) (Pelodictyon luteolum).